The primary structure comprises 380 residues: Pectinesterase QRT1 (380 aa).

The first 26 residues, 1–26 (MKVEAFIPAVLLLCFGVMLCLKSSCA), serve as a signal peptide directing secretion. Residues asparagine 74 and asparagine 137 are each glycosylated (N-linked (GlcNAc...) asparagine). Substrate is bound by residues threonine 164 and glutamine 198. The Proton donor role is filled by aspartate 221. Asparagine 227 is a glycosylation site (N-linked (GlcNAc...) asparagine). Cysteine 235 and cysteine 255 are oxidised to a cystine. The active-site Nucleophile is the aspartate 242. 2 residues coordinate substrate: arginine 298 and tryptophan 300. Asparagine 302 is a glycosylation site (N-linked (GlcNAc...) asparagine).

The protein belongs to the pectinesterase family. As to expression, expressed in flower buds, siliques, developing guard cells, floral nectares, at the stigmatic surface, in the hypocotyl-root transition zone and the area of lateral root emergence. Not expressed in mature leaves.

The protein resides in the secreted. It is found in the cell wall. The enzyme catalyses [(1-&gt;4)-alpha-D-galacturonosyl methyl ester](n) + n H2O = [(1-&gt;4)-alpha-D-galacturonosyl](n) + n methanol + n H(+). It participates in glycan metabolism; pectin degradation; 2-dehydro-3-deoxy-D-gluconate from pectin: step 1/5. Its function is as follows. Pectinesterase required for cell type-specific pectin degradation to separate microspores. This chain is Pectinesterase QRT1, found in Arabidopsis thaliana (Mouse-ear cress).